A 453-amino-acid polypeptide reads, in one-letter code: MKEKQFWNRILEFAQERLTRSMYDFYAIQAEVIKVEENVATIFLPRSEMEMVWEKQLKDIIVVAGFEIYDAEITPHYIFTKPQDTTSSQVEEATNLTLYDYSPKLVSIPYSDTGLKEKYTFDNFIQGDGNVWAVSAALAVSEDLALTYNPLFIYGGPGLGKTHLLNAIGNEILKNIPNARVKYIPAESFINDFLDHLRLGEMEKFKKTYRSLDLLLIDDIQSLSGKKVATQEEFFNTFNALHDKQKQIVLTSDRSPKHLEGLEERLVTRFSWGLTQTITPPDFETRIAILQSKTEHLGYNFQSDTLEYLAGQFDSNVRDLEGAINDITLIARVKKIKDITIDIAAEAIRARKQDVSQMLVIPIDKIQTEVGNFYGVSIKEMKGSRRLQNIVLARQVAMYLSRELTDNSLPKIGKEFGGKDHTTVIHAHAKIKSLIDQDDNLRLEIESIKKKIK.

The segment at 1–74 (MKEKQFWNRI…GFEIYDAEIT (74 aa)) is domain I, interacts with DnaA modulators. Residues 74-113 (TPHYIFTKPQDTTSSQVEEATNLTLYDYSPKLVSIPYSDT) are domain II. The domain III, AAA+ region stretch occupies residues 114–331 (GLKEKYTFDN…GAINDITLIA (218 aa)). ATP-binding residues include Gly158, Gly160, Lys161, and Thr162. The interval 332–453 (RVKKIKDITI…EIESIKKKIK (122 aa)) is domain IV, binds dsDNA.

The protein belongs to the DnaA family. In terms of assembly, oligomerizes as a right-handed, spiral filament on DNA at oriC.

It is found in the cytoplasm. Functionally, plays an essential role in the initiation and regulation of chromosomal replication. ATP-DnaA binds to the origin of replication (oriC) to initiate formation of the DNA replication initiation complex once per cell cycle. Binds the DnaA box (a 9 base pair repeat at the origin) and separates the double-stranded (ds)DNA. Forms a right-handed helical filament on oriC DNA; dsDNA binds to the exterior of the filament while single-stranded (ss)DNA is stabiized in the filament's interior. The ATP-DnaA-oriC complex binds and stabilizes one strand of the AT-rich DNA unwinding element (DUE), permitting loading of DNA polymerase. After initiation quickly degrades to an ADP-DnaA complex that is not apt for DNA replication. Binds acidic phospholipids. The sequence is that of Chromosomal replication initiator protein DnaA from Streptococcus pneumoniae (strain P1031).